Consider the following 171-residue polypeptide: S-ribosylhomocysteine lyase (171 aa).

Residues His54, His58, and Cys128 each coordinate Fe cation.

The protein belongs to the LuxS family. In terms of assembly, homodimer. Requires Fe cation as cofactor.

The enzyme catalyses S-(5-deoxy-D-ribos-5-yl)-L-homocysteine = (S)-4,5-dihydroxypentane-2,3-dione + L-homocysteine. Functionally, involved in the synthesis of autoinducer 2 (AI-2) which is secreted by bacteria and is used to communicate both the cell density and the metabolic potential of the environment. The regulation of gene expression in response to changes in cell density is called quorum sensing. Catalyzes the transformation of S-ribosylhomocysteine (RHC) to homocysteine (HC) and 4,5-dihydroxy-2,3-pentadione (DPD). This chain is S-ribosylhomocysteine lyase, found in Serratia proteamaculans (strain 568).